Reading from the N-terminus, the 335-residue chain is Probable phosphoglycerate mutase ARB_03491 (335 aa).

The N-terminal stretch at methionine 1–alanine 24 is a signal peptide. Histidine 108 (tele-phosphohistidine intermediate) is an active-site residue. Glutamate 211 functions as the Proton donor/acceptor in the catalytic mechanism.

This sequence belongs to the phosphoglycerate mutase family.

Its subcellular location is the secreted. Probable phosphomutase that may have a function related to the manipulation of phosphate groups on carbohydrates. The protein is Probable phosphoglycerate mutase ARB_03491 of Arthroderma benhamiae (strain ATCC MYA-4681 / CBS 112371) (Trichophyton mentagrophytes).